Reading from the N-terminus, the 442-residue chain is Tubulin beta chain (442 aa).

Q11, E67, S136, G140, T141, G142, and N202 together coordinate GTP. Position 67 (E67) interacts with Mg(2+).

It belongs to the tubulin family. Dimer of alpha and beta chains. A typical microtubule is a hollow water-filled tube with an outer diameter of 25 nm and an inner diameter of 15 nM. Alpha-beta heterodimers associate head-to-tail to form protofilaments running lengthwise along the microtubule wall with the beta-tubulin subunit facing the microtubule plus end conferring a structural polarity. Microtubules usually have 13 protofilaments but different protofilament numbers can be found in some organisms and specialized cells. Requires Mg(2+) as cofactor.

It localises to the cytoplasm. The protein resides in the cytoskeleton. Its function is as follows. Tubulin is the major constituent of microtubules, a cylinder consisting of laterally associated linear protofilaments composed of alpha- and beta-tubulin heterodimers. Microtubules grow by the addition of GTP-tubulin dimers to the microtubule end, where a stabilizing cap forms. Below the cap, tubulin dimers are in GDP-bound state, owing to GTPase activity of alpha-tubulin. The sequence is that of Tubulin beta chain (TUBB) from Euglena gracilis.